Reading from the N-terminus, the 555-residue chain is Spermine oxidase (555 aa).

Residues Ala35, Glu55, Arg63, 79-80 (TW), and Val261 each bind FAD. A disordered region spans residues 271-307 (AHPRGPEIEPRGEGDHNHDTGEGGQSGENPQQGRWDE). Over residues 274–291 (RGPEIEPRGEGDHNHDTG) the composition is skewed to basic and acidic residues. FAD-binding positions include Glu519 and 528–529 (TT).

This sequence belongs to the flavin monoamine oxidase family. The cofactor is FAD. As to expression, widely expressed. Isoform 1 and isoform 2 are expressed at higher level in brain and skeletal muscle. Isoform 7 is found in brain and spleen, isoform 10 is widely expressed but found at lower level in heart, kidney, liver and lung.

The protein localises to the cytoplasm. The protein resides in the nucleus. The enzyme catalyses spermine + O2 + H2O = 3-aminopropanal + spermidine + H2O2. It functions in the pathway amine and polyamine degradation; spermine degradation. Its function is as follows. Flavoenzyme which catalyzes the oxidation of spermine to spermidine. Can also use N(1)-acetylspermine and spermidine as substrates, with different affinity depending on the isoform (isozyme) and on the experimental conditions. Plays an important role in the regulation of polyamine intracellular concentration and has the potential to act as a determinant of cellular sensitivity to the antitumor polyamine analogs. May contribute to beta-alanine production via aldehyde dehydrogenase conversion of 3-amino-propanal. This Mus musculus (Mouse) protein is Spermine oxidase (Smox).